The primary structure comprises 345 residues: Uroporphyrinogen decarboxylase (345 aa).

Substrate is bound by residues 27–31 (RQAGR), F46, D76, Y152, S207, and H321.

It belongs to the uroporphyrinogen decarboxylase family. In terms of assembly, homodimer.

Its subcellular location is the cytoplasm. The catalysed reaction is uroporphyrinogen III + 4 H(+) = coproporphyrinogen III + 4 CO2. Its pathway is porphyrin-containing compound metabolism; protoporphyrin-IX biosynthesis; coproporphyrinogen-III from 5-aminolevulinate: step 4/4. Its function is as follows. Catalyzes the decarboxylation of four acetate groups of uroporphyrinogen-III to yield coproporphyrinogen-III. This is Uroporphyrinogen decarboxylase from Staphylococcus aureus (strain Mu3 / ATCC 700698).